The following is a 415-amino-acid chain: MQLTAVGLNHQTAPLSIREKLAFAAAALPEAVRNLARSNAATEAVILSTCNRTELYCVGDSEEIIRWLADYHSLPIEEIRPYLYTLDMQETVRHAFRVACGLDSMVLGEPQILGQIKDAVRAAQEQESMGAKLNALFQKTFSVAKEVRTDTAVGENSVSMASASVKLAEQIFPDIGDLNVLFIGAGEMIELVATYFAAKNPRLMTVANRTLARAQELCDKLGVNAEPCLLSDLPAILHDYDVVVSSTASQLPIVGKGMVERALKQRQSMPLFMLDLAVPRDIEAEVGDLNDAYLYTVDDMVNIVQSGKEARQKAAAAAETLVSEKVAEFVRQQQGRQSVPLIKALRDEGEKARKQVLENAMKQLAKGATAEEVLERLSVQLTNKLLHSPTQTLNKAGEEDKDLVHAVAQIYHLDK.

Residues 49 to 52 (TCNR), S104, 109 to 111 (EPQ), and Q115 each bind substrate. The active-site Nucleophile is C50. An NADP(+)-binding site is contributed by 184–189 (GAGEMI).

This sequence belongs to the glutamyl-tRNA reductase family. As to quaternary structure, homodimer.

It catalyses the reaction (S)-4-amino-5-oxopentanoate + tRNA(Glu) + NADP(+) = L-glutamyl-tRNA(Glu) + NADPH + H(+). The protein operates within porphyrin-containing compound metabolism; protoporphyrin-IX biosynthesis; 5-aminolevulinate from L-glutamyl-tRNA(Glu): step 1/2. In terms of biological role, catalyzes the NADPH-dependent reduction of glutamyl-tRNA(Glu) to glutamate 1-semialdehyde (GSA). In Neisseria gonorrhoeae (strain ATCC 700825 / FA 1090), this protein is Glutamyl-tRNA reductase.